Consider the following 523-residue polypeptide: MKNLVLDNRFVHELPGDPNPSPDVRQVHGACYSRVMPTPVSAPHLIAWSPEVAALLGFDESDVRSPEFAAVFAGNALMPGMEPYAACYGGHQFGNWAGQLGDGRAITLGEAVTTRGDGHTGRWELQLKGAGPTPYSRHADGRAVLRSSIREFLCSEAMHHLGVPTTRALCLVGTGEKVVRDMFYDGRPKAEPGAVVCRVAPSFIRFGNFEIFTSRGDEALLTRLVDFTIARDFPELGGEPATRRAEWFCKVCERTARMIAQWMRVGFVHGVMNTDNMSILGLTIDYGPYGWIDNFDPGWTPNTTDAGGKRYRFGNQPHIAHWNLLQLANALYPVFGAAEPLHEGLDLYARVFDEENRRMLAAKLGFEAFGDEDATLVETLHALLTRAEVDMTIFFRGLASLDLEAPSIDPLRDAFYSAEKAAVAEPEMNSWLAAYTKRTKQERTPGDQRRVRMNAVNPRFVLRNYLAQEAIDAAEQGEYALVSELLDVMRHPYDEQPGRERFAARRPDWARNRAGCSMLSCSS.

ATP contacts are provided by Gly-101, Gly-103, Arg-104, Lys-128, Asp-140, Gly-141, Arg-198, and Arg-205. Asp-275 functions as the Proton acceptor in the catalytic mechanism. Mg(2+) contacts are provided by Asn-276 and Asp-285. Residue Asp-285 participates in ATP binding.

The protein belongs to the SELO family. It depends on Mg(2+) as a cofactor. Mn(2+) serves as cofactor.

It carries out the reaction L-seryl-[protein] + ATP = 3-O-(5'-adenylyl)-L-seryl-[protein] + diphosphate. The enzyme catalyses L-threonyl-[protein] + ATP = 3-O-(5'-adenylyl)-L-threonyl-[protein] + diphosphate. It catalyses the reaction L-tyrosyl-[protein] + ATP = O-(5'-adenylyl)-L-tyrosyl-[protein] + diphosphate. The catalysed reaction is L-histidyl-[protein] + UTP = N(tele)-(5'-uridylyl)-L-histidyl-[protein] + diphosphate. It carries out the reaction L-seryl-[protein] + UTP = O-(5'-uridylyl)-L-seryl-[protein] + diphosphate. The enzyme catalyses L-tyrosyl-[protein] + UTP = O-(5'-uridylyl)-L-tyrosyl-[protein] + diphosphate. In terms of biological role, nucleotidyltransferase involved in the post-translational modification of proteins. It can catalyze the addition of adenosine monophosphate (AMP) or uridine monophosphate (UMP) to a protein, resulting in modifications known as AMPylation and UMPylation. The polypeptide is Protein nucleotidyltransferase YdiU (Aromatoleum aromaticum (strain DSM 19018 / LMG 30748 / EbN1) (Azoarcus sp. (strain EbN1))).